Here is a 187-residue protein sequence, read N- to C-terminus: UPF0301 protein VSAL_I0547 (187 aa).

This sequence belongs to the UPF0301 (AlgH) family.

This Aliivibrio salmonicida (strain LFI1238) (Vibrio salmonicida (strain LFI1238)) protein is UPF0301 protein VSAL_I0547.